A 257-amino-acid polypeptide reads, in one-letter code: Glucosamine-6-phosphate deaminase (257 aa).

Residue D64 is the Proton acceptor; for enolization step of the active site. Residue N133 is the For ring-opening step of the active site. The active-site Proton acceptor; for ring-opening step is the H135. Residue E140 is the For ring-opening step of the active site.

This sequence belongs to the glucosamine/galactosamine-6-phosphate isomerase family. NagB subfamily.

The enzyme catalyses alpha-D-glucosamine 6-phosphate + H2O = beta-D-fructose 6-phosphate + NH4(+). Its pathway is amino-sugar metabolism; N-acetylneuraminate degradation; D-fructose 6-phosphate from N-acetylneuraminate: step 5/5. Functionally, catalyzes the reversible isomerization-deamination of glucosamine 6-phosphate (GlcN6P) to form fructose 6-phosphate (Fru6P) and ammonium ion. This Corynebacterium urealyticum (strain ATCC 43042 / DSM 7109) protein is Glucosamine-6-phosphate deaminase.